A 289-amino-acid polypeptide reads, in one-letter code: Type II methyltransferase M.MjaIII (289 aa).

The S-adenosyl-L-methionine site is built by Trp9, Lys13, Asp63, and Asp199.

The protein belongs to the N(4)/N(6)-methyltransferase family.

It catalyses the reaction a 2'-deoxyadenosine in DNA + S-adenosyl-L-methionine = an N(6)-methyl-2'-deoxyadenosine in DNA + S-adenosyl-L-homocysteine + H(+). Its function is as follows. An alpha subtype methylase that recognizes the double-stranded sequence 5'-GATC-3', methylates A-2 on both strands, and protects the DNA from cleavage by the MjaIII endonuclease. The chain is Type II methyltransferase M.MjaIII (mjaIIIM) from Methanocaldococcus jannaschii (strain ATCC 43067 / DSM 2661 / JAL-1 / JCM 10045 / NBRC 100440) (Methanococcus jannaschii).